The following is a 276-amino-acid chain: Vitamin B12-binding protein (276 aa).

The signal sequence occupies residues 1 to 20 (MLVIRLIACTFLFITPSLLA). The Fe/B12 periplasmic-binding domain occupies 27-274 (RIISLAPHAT…QVCTYLKIAQ (248 aa)). Tyr54 contributes to the cyanocob(III)alamin binding site. A disulfide bond links Cys187 and Cys267.

Belongs to the BtuF family. In terms of assembly, the complex is composed of two ATP-binding proteins (BtuD), two transmembrane proteins (BtuC) and a solute-binding protein (BtuF).

The protein localises to the periplasm. In terms of biological role, part of the ABC transporter complex BtuCDF involved in vitamin B12 import. Binds vitamin B12 and delivers it to the periplasmic surface of BtuC. This Vibrio cholerae serotype O1 (strain ATCC 39541 / Classical Ogawa 395 / O395) protein is Vitamin B12-binding protein.